Consider the following 574-residue polypeptide: Sulfate adenylyltransferase (574 aa).

The tract at residues 1–169 (MANPPHGGVL…IEAINKLNHY (169 aa)) is N-terminal. A catalytic region spans residues 170–394 (DYVALRYTPA…LRESSPPRHT (225 aa)). A sulfate-binding site is contributed by Q197. Residues 197-200 (QTRN) and 291-294 (GRDH) each bind ATP. Catalysis depends on residues T198, R199, and N200. R199 contributes to the sulfate binding site. A295 serves as a coordination point for sulfate. Residue V333 coordinates ATP. Residues 395-574 (QGFTIFLTGY…LETEGFFDRS (180 aa)) form an allosteric regulation domain; adenylyl-sulfate kinase-like region. 3'-phosphoadenylyl sulfate is bound by residues 434 to 437 (DTVR), R451, 477 to 478 (IA), and R516.

In the N-terminal section; belongs to the sulfate adenylyltransferase family. This sequence in the C-terminal section; belongs to the APS kinase family. In terms of assembly, homohexamer. Dimer of trimers.

It localises to the cytoplasm. It carries out the reaction sulfate + ATP + H(+) = adenosine 5'-phosphosulfate + diphosphate. Its pathway is sulfur metabolism; hydrogen sulfide biosynthesis; sulfite from sulfate: step 1/3. Its activity is regulated as follows. Allosterically inhibited by 3'-phosphoadenosine 5'-phosphosulfate (PAPS). In terms of biological role, catalyzes the first intracellular reaction of sulfate assimilation, forming adenosine-5'-phosphosulfate (APS) from inorganic sulfate and ATP. Plays an important role in sulfate activation as a component of the biosynthesis pathway of sulfur-containing amino acids. The polypeptide is Sulfate adenylyltransferase (Aspergillus fumigatus (strain ATCC MYA-4609 / CBS 101355 / FGSC A1100 / Af293) (Neosartorya fumigata)).